The chain runs to 230 residues: PKHD-type hydroxylase XF_0598 (230 aa).

The Fe2OG dioxygenase domain occupies 78-182; that stretch reads RTLPPRFNCY…RIASFFWVQS (105 aa). Fe cation contacts are provided by H96, D98, and H163. A 2-oxoglutarate-binding site is contributed by R173.

The cofactor is Fe(2+). L-ascorbate is required as a cofactor.

This Xylella fastidiosa (strain 9a5c) protein is PKHD-type hydroxylase XF_0598.